The following is a 1308-amino-acid chain: Cadherin-related family member 2 (1308 aa).

A signal peptide spans 1 to 20; that stretch reads MAWLWLLCALLPAFMVSVTA. Topologically, residues 21 to 1152 are extracellular; sequence NSPPSFGVNM…EPDQQKLLTS (1132 aa). Cadherin domains follow at residues 33 to 124, 125 to 241, 242 to 353, 368 to 480, 481 to 586, 586 to 695, 695 to 807, 809 to 927, and 929 to 1051; these read VTLP…IPVF, LNTE…DPRF, IREF…KPEF, AQVN…RPVF, SQSL…PPVV, VRGS…LPVF, FNQS…PPTL, AASL…APYF, and PNNQ…RLQF. The chain crosses the membrane as a helical span at residues 1153-1173; sequence VIIGLVVSLVLVLVILITALV. At 1174 to 1308 the chain is on the cytoplasmic side; the sequence is CLRKSYHRKL…TNPGLDTTDL (135 aa). Positions 1178-1308 are mediates interaction with USH1C and MYO7B and is required for proper localization to microvilli tips and function in microvilli organization; the sequence is SYHRKLRAMK…TNPGLDTTDL (131 aa). A Phosphoserine modification is found at serine 1245. Residues 1251–1308 form a disordered region; that stretch reads VDLDMDSKEFKRKDLPGDPPEPDPEPLTAVLSGRSAGASEQQKKNLSFTNPGLDTTDL. Residues 1255–1266 show a composition bias toward basic and acidic residues; that stretch reads MDSKEFKRKDLP. The segment covering 1288–1308 has biased composition (polar residues); sequence ASEQQKKNLSFTNPGLDTTDL. Residue serine 1297 is modified to Phosphoserine.

As to quaternary structure, part of the IMAC/intermicrovillar adhesion complex/intermicrovillar tip-link complex composed of ANKS4B, MYO7B, USH1C, CDHR2 and CDHR5. Interacts with MAST2. Interacts (via cytoplasmic domain) with USH1C and MYO7B; required for proper localization of CDHR2 to microvilli tips and its function in brush border differentiation.

It localises to the apical cell membrane. It is found in the cell projection. The protein resides in the microvillus membrane. Its subcellular location is the cell junction. In terms of biological role, intermicrovillar adhesion molecule that forms, via its extracellular domain, calcium-dependent heterophilic complexes with CDHR5 on adjacent microvilli. Thereby, controls the packing of microvilli at the apical membrane of epithelial cells. Through its cytoplasmic domain, interacts with microvillus cytoplasmic proteins to form the intermicrovillar adhesion complex/IMAC. This complex plays a central role in microvilli and epithelial brush border differentiation. May also play a role in cell-cell adhesion and contact inhibition in epithelial cells. The protein is Cadherin-related family member 2 of Mus musculus (Mouse).